The chain runs to 186 residues: Holliday junction branch migration complex subunit RuvA (186 aa).

Residues 1 to 61 form a domain I region; the sequence is MYSYIKGKVV…ENLQILYGFN (61 aa). The interval 62–134 is domain II; it reads DNKNLLFFKK…LKGDLIFSEK (73 aa). Residues 134–135 form a flexible linker region; that stretch reads KI. Positions 136–186 are domain III; the sequence is ILNPKKTELEKILLNLGFVKKEIKSVLNQIDDKKELELMLKEVLLKLAKNI.

Belongs to the RuvA family. As to quaternary structure, homotetramer. Forms an RuvA(8)-RuvB(12)-Holliday junction (HJ) complex. HJ DNA is sandwiched between 2 RuvA tetramers; dsDNA enters through RuvA and exits via RuvB. An RuvB hexamer assembles on each DNA strand where it exits the tetramer. Each RuvB hexamer is contacted by two RuvA subunits (via domain III) on 2 adjacent RuvB subunits; this complex drives branch migration. In the full resolvosome a probable DNA-RuvA(4)-RuvB(12)-RuvC(2) complex forms which resolves the HJ.

Its subcellular location is the cytoplasm. In terms of biological role, the RuvA-RuvB-RuvC complex processes Holliday junction (HJ) DNA during genetic recombination and DNA repair, while the RuvA-RuvB complex plays an important role in the rescue of blocked DNA replication forks via replication fork reversal (RFR). RuvA specifically binds to HJ cruciform DNA, conferring on it an open structure. The RuvB hexamer acts as an ATP-dependent pump, pulling dsDNA into and through the RuvAB complex. HJ branch migration allows RuvC to scan DNA until it finds its consensus sequence, where it cleaves and resolves the cruciform DNA. The sequence is that of Holliday junction branch migration complex subunit RuvA from Phytoplasma mali (strain AT).